The following is a 336-amino-acid chain: 4-hydroxy-3-methylbut-2-enyl diphosphate reductase (336 aa).

Cysteine 32 lines the [4Fe-4S] cluster pocket. (2E)-4-hydroxy-3-methylbut-2-enyl diphosphate is bound by residues histidine 61 and histidine 94. Residues histidine 61 and histidine 94 each contribute to the dimethylallyl diphosphate site. Isopentenyl diphosphate is bound by residues histidine 61 and histidine 94. Cysteine 116 is a [4Fe-4S] cluster binding site. Histidine 148 contacts (2E)-4-hydroxy-3-methylbut-2-enyl diphosphate. Histidine 148 is a dimethylallyl diphosphate binding site. Histidine 148 contributes to the isopentenyl diphosphate binding site. The active-site Proton donor is the glutamate 150. (2E)-4-hydroxy-3-methylbut-2-enyl diphosphate is bound at residue threonine 189. Cysteine 219 contributes to the [4Fe-4S] cluster binding site. Serine 247, serine 248, asparagine 249, and serine 292 together coordinate (2E)-4-hydroxy-3-methylbut-2-enyl diphosphate. Dimethylallyl diphosphate-binding residues include serine 247, serine 248, asparagine 249, and serine 292. Isopentenyl diphosphate contacts are provided by serine 247, serine 248, asparagine 249, and serine 292.

It belongs to the IspH family. The cofactor is [4Fe-4S] cluster.

The enzyme catalyses isopentenyl diphosphate + 2 oxidized [2Fe-2S]-[ferredoxin] + H2O = (2E)-4-hydroxy-3-methylbut-2-enyl diphosphate + 2 reduced [2Fe-2S]-[ferredoxin] + 2 H(+). It catalyses the reaction dimethylallyl diphosphate + 2 oxidized [2Fe-2S]-[ferredoxin] + H2O = (2E)-4-hydroxy-3-methylbut-2-enyl diphosphate + 2 reduced [2Fe-2S]-[ferredoxin] + 2 H(+). It participates in isoprenoid biosynthesis; dimethylallyl diphosphate biosynthesis; dimethylallyl diphosphate from (2E)-4-hydroxy-3-methylbutenyl diphosphate: step 1/1. Its pathway is isoprenoid biosynthesis; isopentenyl diphosphate biosynthesis via DXP pathway; isopentenyl diphosphate from 1-deoxy-D-xylulose 5-phosphate: step 6/6. Its function is as follows. Catalyzes the conversion of 1-hydroxy-2-methyl-2-(E)-butenyl 4-diphosphate (HMBPP) into a mixture of isopentenyl diphosphate (IPP) and dimethylallyl diphosphate (DMAPP). Acts in the terminal step of the DOXP/MEP pathway for isoprenoid precursor biosynthesis. The chain is 4-hydroxy-3-methylbut-2-enyl diphosphate reductase from Gluconobacter oxydans (strain 621H) (Gluconobacter suboxydans).